The primary structure comprises 179 residues: UPF0200 protein TV0279 (179 aa).

6-13 lines the ATP pocket; that stretch reads GMPGAGKD.

It belongs to the UPF0200 family.

The polypeptide is UPF0200 protein TV0279 (Thermoplasma volcanium (strain ATCC 51530 / DSM 4299 / JCM 9571 / NBRC 15438 / GSS1)).